Here is a 103-residue protein sequence, read N- to C-terminus: Large ribosomal subunit protein bL21 (103 aa).

The protein belongs to the bacterial ribosomal protein bL21 family. As to quaternary structure, part of the 50S ribosomal subunit. Contacts protein L20.

This protein binds to 23S rRNA in the presence of protein L20. This Acidovorax ebreus (strain TPSY) (Diaphorobacter sp. (strain TPSY)) protein is Large ribosomal subunit protein bL21.